A 238-amino-acid chain; its full sequence is ATP synthase subunit a (238 aa).

The next 4 helical transmembrane spans lie at 17-37 (LSNI…AIIC), 80-100 (ITLL…QIAI), 112-132 (DPIV…YYGI), and 194-214 (IFVG…SIFI).

This sequence belongs to the ATPase A chain family. In terms of assembly, F-type ATPases have 2 components, CF(1) - the catalytic core - and CF(0) - the membrane proton channel. CF(1) has five subunits: alpha(3), beta(3), gamma(1), delta(1), epsilon(1). CF(0) has three main subunits: a(1), b(2) and c(9-12). The alpha and beta chains form an alternating ring which encloses part of the gamma chain. CF(1) is attached to CF(0) by a central stalk formed by the gamma and epsilon chains, while a peripheral stalk is formed by the delta and b chains.

It localises to the cell membrane. Key component of the proton channel; it plays a direct role in the translocation of protons across the membrane. This chain is ATP synthase subunit a, found in Listeria welshimeri serovar 6b (strain ATCC 35897 / DSM 20650 / CCUG 15529 / CIP 8149 / NCTC 11857 / SLCC 5334 / V8).